Reading from the N-terminus, the 443-residue chain is Phosphoglucosamine mutase (443 aa).

Serine 102 (phosphoserine intermediate) is an active-site residue. Positions 102, 241, 243, and 245 each coordinate Mg(2+). Phosphoserine is present on serine 102.

It belongs to the phosphohexose mutase family. Mg(2+) serves as cofactor. In terms of processing, activated by phosphorylation.

It carries out the reaction alpha-D-glucosamine 1-phosphate = D-glucosamine 6-phosphate. Functionally, catalyzes the conversion of glucosamine-6-phosphate to glucosamine-1-phosphate. In Polaromonas naphthalenivorans (strain CJ2), this protein is Phosphoglucosamine mutase.